Here is a 129-residue protein sequence, read N- to C-terminus: UPF0212 protein MM_2357 (129 aa).

It belongs to the UPF0212 family.

In Methanosarcina mazei (strain ATCC BAA-159 / DSM 3647 / Goe1 / Go1 / JCM 11833 / OCM 88) (Methanosarcina frisia), this protein is UPF0212 protein MM_2357.